The sequence spans 64 residues: Large ribosomal subunit protein bL33 (64 aa).

Over residues 16-25 (EARTSSEPRR) the composition is skewed to basic and acidic residues. The disordered stretch occupies residues 16-39 (EARTSSEPRRSNGISRYTTEKNKR).

This sequence belongs to the bacterial ribosomal protein bL33 family.

In Prochlorococcus marinus (strain MIT 9515), this protein is Large ribosomal subunit protein bL33.